Consider the following 193-residue polypeptide: MFSISVVITIGGLPGSGTTTMARRLAEHYGLKHVYAGKIFREMAEERGMDLEEFSKVAEDNPDIDLEIDRRQREAAEEGDVILEGRLAAFVAAGELDHVKGPDLATLKIWLKAPLEVRAERVAKREGIDVEEARRRIQEREKSELKRYKEIYGVDPTDLSLYDLVLDTSRWSEDETFSILKAAIDPLLEREDP.

12–20 contacts ATP; that stretch reads GLPGSGTTT.

It belongs to the cytidylate kinase family. Type 2 subfamily.

Its subcellular location is the cytoplasm. The catalysed reaction is CMP + ATP = CDP + ADP. The enzyme catalyses dCMP + ATP = dCDP + ADP. The polypeptide is Cytidylate kinase (Methanopyrus kandleri (strain AV19 / DSM 6324 / JCM 9639 / NBRC 100938)).